The sequence spans 376 residues: N-acetyldiaminopimelate deacetylase (376 aa).

D69 is a catalytic residue. The active-site Proton acceptor is the E128.

The protein belongs to the peptidase M20A family. N-acetyldiaminopimelate deacetylase subfamily.

The catalysed reaction is N-acetyl-(2S,6S)-2,6-diaminopimelate + H2O = (2S,6S)-2,6-diaminopimelate + acetate. It functions in the pathway amino-acid biosynthesis; L-lysine biosynthesis via DAP pathway; LL-2,6-diaminopimelate from (S)-tetrahydrodipicolinate (acetylase route): step 3/3. Its function is as follows. Catalyzes the conversion of N-acetyl-diaminopimelate to diaminopimelate and acetate. This is N-acetyldiaminopimelate deacetylase from Streptococcus pneumoniae serotype 19F (strain G54).